Reading from the N-terminus, the 365-residue chain is UDP-N-acetylglucosamine--N-acetylmuramyl-(pentapeptide) pyrophosphoryl-undecaprenol N-acetylglucosamine transferase (365 aa).

Residues 19 to 21 (TGG), Asn-131, Arg-170, Ser-201, Ile-255, 274 to 279 (ALTVTE), and Gln-300 each bind UDP-N-acetyl-alpha-D-glucosamine.

The protein belongs to the glycosyltransferase 28 family. MurG subfamily.

It is found in the cell inner membrane. The catalysed reaction is di-trans,octa-cis-undecaprenyl diphospho-N-acetyl-alpha-D-muramoyl-L-alanyl-D-glutamyl-meso-2,6-diaminopimeloyl-D-alanyl-D-alanine + UDP-N-acetyl-alpha-D-glucosamine = di-trans,octa-cis-undecaprenyl diphospho-[N-acetyl-alpha-D-glucosaminyl-(1-&gt;4)]-N-acetyl-alpha-D-muramoyl-L-alanyl-D-glutamyl-meso-2,6-diaminopimeloyl-D-alanyl-D-alanine + UDP + H(+). It participates in cell wall biogenesis; peptidoglycan biosynthesis. Its function is as follows. Cell wall formation. Catalyzes the transfer of a GlcNAc subunit on undecaprenyl-pyrophosphoryl-MurNAc-pentapeptide (lipid intermediate I) to form undecaprenyl-pyrophosphoryl-MurNAc-(pentapeptide)GlcNAc (lipid intermediate II). The sequence is that of UDP-N-acetylglucosamine--N-acetylmuramyl-(pentapeptide) pyrophosphoryl-undecaprenol N-acetylglucosamine transferase from Acinetobacter baumannii (strain ATCC 17978 / DSM 105126 / CIP 53.77 / LMG 1025 / NCDC KC755 / 5377).